A 423-amino-acid polypeptide reads, in one-letter code: UPF0229 protein VV1_2091 (423 aa).

Residues 81–111 (QFITGDKIERPKGGQGGGGAGDGDASADGEG) are disordered. The span at 93–102 (GGQGGGGAGD) shows a compositional bias: gly residues.

It belongs to the UPF0229 family.

The sequence is that of UPF0229 protein VV1_2091 from Vibrio vulnificus (strain CMCP6).